A 558-amino-acid polypeptide reads, in one-letter code: Membrane protein insertase YidC (558 aa).

A run of 5 helical transmembrane segments spans residues 3–23 (IKRTVLWVIFFMSAVMLFDNW), 364–384 (FVGNWGWAIVLLTLLIKAVFF), 438–458 (LPVVIQIPVFISLYWVLLASV), 477–497 (PYFILPVLMAVSMFVQTKLNP), and 508–528 (MMFMPIAFSVMFFFFPAGLVL).

The protein belongs to the OXA1/ALB3/YidC family. Type 1 subfamily. Interacts with the Sec translocase complex via SecD. Specifically interacts with transmembrane segments of nascent integral membrane proteins during membrane integration.

It is found in the cell inner membrane. Its function is as follows. Required for the insertion and/or proper folding and/or complex formation of integral membrane proteins into the membrane. Involved in integration of membrane proteins that insert both dependently and independently of the Sec translocase complex, as well as at least some lipoproteins. Aids folding of multispanning membrane proteins. In Burkholderia mallei (strain NCTC 10247), this protein is Membrane protein insertase YidC.